A 223-amino-acid chain; its full sequence is MKPVLQGALAWIYAGYKTASRGHLLPYTRHQKFHSSSLISEQAKRAKDLIKLVNSSSLSNSESQSLDWRSDLKVPEWKRQKLALKDKFKGQQWNPKKKLSREQMENVRLLKRHFPETSATELSERFQVSPEVIRRILKSKWQPNEEEQLQLQTRWKRRSERVNEILGSPEHQKLPPKKLVLGSGRTDTDLQVKSVRRTAVKAGRNSSSPKGKQKLNLLSKLIS.

The interval 166 to 223 (LGSPEHQKLPPKKLVLGSGRTDTDLQVKSVRRTAVKAGRNSSSPKGKQKLNLLSKLIS) is disordered.

This sequence belongs to the RRG9 family.

It is found in the mitochondrion. Required for respiratory activity and maintenance and expression of the mitochondrial genome. This chain is Required for respiratory growth protein 9, mitochondrial (RRG9), found in Lachancea thermotolerans (strain ATCC 56472 / CBS 6340 / NRRL Y-8284) (Yeast).